Reading from the N-terminus, the 100-residue chain is Thioredoxin (100 aa).

The Thioredoxin domain maps to 1 to 100 (MKHITNKAEL…PKNELKELLK (100 aa)). Cys29 and Cys32 are oxidised to a cystine.

Belongs to the thioredoxin family.

In terms of biological role, participates in various redox reactions through the reversible oxidation of its active center dithiol to a disulfide and catalyzes dithiol-disulfide exchange reactions. This chain is Thioredoxin (trxA), found in Mycoplasmoides gallisepticum (strain R(low / passage 15 / clone 2)) (Mycoplasma gallisepticum).